The primary structure comprises 325 residues: Natural cytotoxicity triggering receptor 1 (325 aa).

The signal sequence occupies residues 1–16 (MLPTLTALLCLGLCLS). Residues 17-258 (QRINTEKQTL…WDHTAQNLIR (242 aa)) are Extracellular-facing. Ig-like domains follow at residues 42–100 (GNSV…TCFY) and 137–192 (GENV…RCFG). A disulfide bond links C49 and C98. A glycan (N-linked (GlcNAc...) asparagine) is linked at N139. Cysteines 144 and 190 form a disulfide. N216 carries N-linked (GlcNAc...) asparagine glycosylation. A helical transmembrane segment spans residues 259-279 (IGLACIIVMALVWLLAEDWLS). The Cytoplasmic segment spans residues 280–325 (RRKDHEKLNRLTSWECRGRRRMHRYHEEEQRDAISMRELKATPGDM).

The protein belongs to the natural cytotoxicity receptor (NCR) family. In terms of assembly, interacts with CD3Z and FCER1G. As to expression, weakly expressed in spleen, heart and lung.

It localises to the cell membrane. Its function is as follows. Cytotoxicity-activating receptor that may contribute to the increased efficiency of activated natural killer (NK) cells to mediate tumor cell lysis. In Rattus norvegicus (Rat), this protein is Natural cytotoxicity triggering receptor 1 (Ncr1).